Here is a 611-residue protein sequence, read N- to C-terminus: Pescadillo homolog (611 aa).

The interval 310–335 is disordered; it reads VQMGDPDEASPGEEEQFVAHASKSAP. The segment covering 314–325 has biased composition (acidic residues); that stretch reads DPDEASPGEEEQ. Residues 354-455 form the BRCT domain; sequence PSSRLFAPYT…KILLEDTYAQ (102 aa). Disordered stretches follow at residues 469 to 506 and 545 to 611; these read YEGA…ESNT and VKKA…AGGK. A compositionally biased stretch (acidic residues) spans 482–498; the sequence is ADMDVETDGEEGEADAS. Basic and acidic residues-rich tracts occupy residues 552 to 569 and 579 to 602; these read KKPD…KDMN and KLYE…EQRK. A coiled-coil region spans residues 580–609; sequence LYEKMKYSQQKKAAEKEKLEQRKKQLQKAG.

Belongs to the pescadillo family. As to quaternary structure, component of the NOP7 complex, composed of ERB1, NOP7 and YTM1. The complex is held together by ERB1, which interacts with NOP7 via its N-terminal domain and with YTM1 via a high-affinity interaction between the seven-bladed beta-propeller domains of the 2 proteins. The NOP7 complex associates with the 66S pre-ribosome.

It localises to the nucleus. Its subcellular location is the nucleolus. The protein resides in the nucleoplasm. Its function is as follows. Component of the NOP7 complex, which is required for maturation of the 25S and 5.8S ribosomal RNAs and formation of the 60S ribosome. The protein is Pescadillo homolog of Coprinopsis cinerea (strain Okayama-7 / 130 / ATCC MYA-4618 / FGSC 9003) (Inky cap fungus).